The chain runs to 426 residues: Enolase (426 aa).

Gln-165 provides a ligand contact to (2R)-2-phosphoglycerate. Glu-209 functions as the Proton donor in the catalytic mechanism. Positions 244, 287, and 313 each coordinate Mg(2+). Residues Lys-338, Arg-367, Ser-368, and Lys-389 each contribute to the (2R)-2-phosphoglycerate site. Catalysis depends on Lys-338, which acts as the Proton acceptor.

Belongs to the enolase family. Mg(2+) is required as a cofactor.

The protein localises to the cytoplasm. The protein resides in the secreted. It localises to the cell surface. It catalyses the reaction (2R)-2-phosphoglycerate = phosphoenolpyruvate + H2O. The protein operates within carbohydrate degradation; glycolysis; pyruvate from D-glyceraldehyde 3-phosphate: step 4/5. Functionally, catalyzes the reversible conversion of 2-phosphoglycerate (2-PG) into phosphoenolpyruvate (PEP). It is essential for the degradation of carbohydrates via glycolysis. This Methanococcus maripaludis (strain C7 / ATCC BAA-1331) protein is Enolase.